We begin with the raw amino-acid sequence, 149 residues long: Calmodulin-2 (149 aa).

A2 carries the post-translational modification N-acetylalanine. EF-hand domains follow at residues 8–43, 44–79, 81–116, and 117–149; these read EQIA…LGQN, PTEA…KMKD, DSEE…LGEK, and LTDE…MMAK. Ca(2+) contacts are provided by D21, D23, D25, C27, E32, D57, D59, N61, T63, E68, D94, D96, N98, and E105. Residue K116 is modified to N6,N6,N6-trimethyllysine. The Ca(2+) site is built by D130, D132, D134, Q136, and E141.

Belongs to the calmodulin family.

Functionally, calmodulin mediates the control of a large number of enzymes, ion channels and other proteins by Ca(2+). Among the enzymes to be stimulated by the calmodulin-Ca(2+) complex are a number of protein kinases and phosphatases. The sequence is that of Calmodulin-2 (CAM2) from Oryza sativa subsp. indica (Rice).